We begin with the raw amino-acid sequence, 297 residues long: Undecaprenyl-diphosphatase (297 aa).

The next 7 membrane-spanning stretches (helical) occupy residues 58–78 (PGVAFTAVIQLGSIVAVLSYF), 103–123 (AQMGLGILFGTIPILIGGLLI), 138–158 (LAAIAIVSIVMGLLLGIAEQL), 168–188 (LRLADGLWMGFAQALALIPGV), 208–228 (AARFSFLLGIPAITIAGLVEL), 243–263 (VLAIGTLSSLIFSWLAIAWLL), and 274–294 (FVVYRIIFGGVILTAIATGTL).

This sequence belongs to the UppP family.

The protein resides in the cell inner membrane. It carries out the reaction di-trans,octa-cis-undecaprenyl diphosphate + H2O = di-trans,octa-cis-undecaprenyl phosphate + phosphate + H(+). Functionally, catalyzes the dephosphorylation of undecaprenyl diphosphate (UPP). Confers resistance to bacitracin. This chain is Undecaprenyl-diphosphatase, found in Synechococcus sp. (strain ATCC 27144 / PCC 6301 / SAUG 1402/1) (Anacystis nidulans).